A 180-amino-acid chain; its full sequence is Large ribosomal subunit protein uL5 (180 aa).

This sequence belongs to the universal ribosomal protein uL5 family. In terms of assembly, part of the 50S ribosomal subunit; part of the 5S rRNA/L5/L18/L25 subcomplex. Contacts the 5S rRNA and the P site tRNA. Forms a bridge to the 30S subunit in the 70S ribosome.

Functionally, this is one of the proteins that bind and probably mediate the attachment of the 5S RNA into the large ribosomal subunit, where it forms part of the central protuberance. In the 70S ribosome it contacts protein S13 of the 30S subunit (bridge B1b), connecting the 2 subunits; this bridge is implicated in subunit movement. Contacts the P site tRNA; the 5S rRNA and some of its associated proteins might help stabilize positioning of ribosome-bound tRNAs. The polypeptide is Large ribosomal subunit protein uL5 (Limosilactobacillus fermentum (strain NBRC 3956 / LMG 18251) (Lactobacillus fermentum)).